A 72-amino-acid chain; its full sequence is Translation initiation factor IF-1 (72 aa).

Positions 1–72 (MAKEDTLEFP…SKGRINYRFK (72 aa)) constitute an S1-like domain.

The protein belongs to the IF-1 family. As to quaternary structure, component of the 30S ribosomal translation pre-initiation complex which assembles on the 30S ribosome in the order IF-2 and IF-3, IF-1 and N-formylmethionyl-tRNA(fMet); mRNA recruitment can occur at any time during PIC assembly.

It localises to the cytoplasm. One of the essential components for the initiation of protein synthesis. Stabilizes the binding of IF-2 and IF-3 on the 30S subunit to which N-formylmethionyl-tRNA(fMet) subsequently binds. Helps modulate mRNA selection, yielding the 30S pre-initiation complex (PIC). Upon addition of the 50S ribosomal subunit IF-1, IF-2 and IF-3 are released leaving the mature 70S translation initiation complex. This Cereibacter sphaeroides (strain ATCC 17029 / ATH 2.4.9) (Rhodobacter sphaeroides) protein is Translation initiation factor IF-1.